Here is a 51-residue protein sequence, read N- to C-terminus: Large ribosomal subunit protein bL33 (51 aa).

The protein belongs to the bacterial ribosomal protein bL33 family.

The sequence is that of Large ribosomal subunit protein bL33 from Psychrobacter arcticus (strain DSM 17307 / VKM B-2377 / 273-4).